The sequence spans 167 residues: MATKEPESVYELSIEDAKGNNLALSQYKDKVLLIVNVASKCGMTNSNYTELNELYNRYKDKGLEILAFPCNQFGDEEPGTNDQITDFVCTRFKSEFPIFNKIEVNGENASPLYKFLKKGKWGIFGDDIQWNFAKFLVDKNGQAVQRYYPTTSPLTLEHDIKNLLNIS.

The active site involves Cys-41.

The protein belongs to the glutathione peroxidase family.

The enzyme catalyses 2 glutathione + H2O2 = glutathione disulfide + 2 H2O. May constitute a glutathione peroxidase-like protective system against oxidative stresses. The protein is Probable glutathione peroxidase 8 (GPX8) of Arabidopsis thaliana (Mouse-ear cress).